The chain runs to 506 residues: Glucan endo-1,3-beta-glucosidase 13 (506 aa).

A signal peptide spans 1–22 (MARDFKLIFSISILLLLLDCCY). N-linked (GlcNAc...) asparagine glycosylation is present at Asn70. Glu119 (proton donor) is an active-site residue. 3 N-linked (GlcNAc...) asparagine glycosylation sites follow: Asn127, Asn175, and Asn212. Glu264 (nucleophile) is an active-site residue. N-linked (GlcNAc...) asparagine glycosylation is found at Asn356 and Asn361. Residues Cys370 and Cys433 are joined by a disulfide bond. Asn459 and Asn465 each carry an N-linked (GlcNAc...) asparagine glycan. Ser471 carries GPI-anchor amidated serine lipidation. A propeptide spans 472-506 (SASTPRGNELLQWILKLCLMISLFFSLQTMNSQAL) (removed in mature form).

It belongs to the glycosyl hydrolase 17 family. In terms of processing, contains two additional disulfide bonds.

It localises to the secreted. The protein localises to the cell wall. The protein resides in the cell membrane. The enzyme catalyses Hydrolysis of (1-&gt;3)-beta-D-glucosidic linkages in (1-&gt;3)-beta-D-glucans.. The sequence is that of Glucan endo-1,3-beta-glucosidase 13 from Arabidopsis thaliana (Mouse-ear cress).